A 36-amino-acid chain; its full sequence is Pancreatic polypeptide (36 aa).

Position 36 is a tyrosine amide (Tyr36).

This sequence belongs to the NPY family.

Its subcellular location is the secreted. In terms of biological role, hormone secreted by pancreatic cells that acts as a regulator of pancreatic and gastrointestinal functions. In Struthio camelus (Common ostrich), this protein is Pancreatic polypeptide (PPY).